Reading from the N-terminus, the 316-residue chain is Beta-lactamase 3 (316 aa).

The signal sequence occupies residues 1 to 29 (MFVLNKFFTNSHYKKIVPVVLLSCATLIG). A lipid anchor (N-palmitoyl cysteine) is attached at cysteine 30. Cysteine 30 carries S-diacylglycerol cysteine lipidation. Residues 34–53 (NTQSESNKQTNQTNQVKQEN) are disordered. Residues 40-50 (NKQTNQTNQVK) show a composition bias toward low complexity. The active-site Acyl-ester intermediate is the serine 95. Glutamate 191 (proton acceptor) is an active-site residue. 257–259 (KTG) serves as a coordination point for substrate.

This sequence belongs to the class-A beta-lactamase family.

It localises to the cell membrane. It carries out the reaction a beta-lactam + H2O = a substituted beta-amino acid. The polypeptide is Beta-lactamase 3 (blaZ) (Bacillus cereus).